The chain runs to 266 residues: Regulatory protein RecX (266 aa).

This sequence belongs to the RecX family.

The protein resides in the cytoplasm. Modulates RecA activity. The sequence is that of Regulatory protein RecX from Levilactobacillus brevis (strain ATCC 367 / BCRC 12310 / CIP 105137 / JCM 1170 / LMG 11437 / NCIMB 947 / NCTC 947) (Lactobacillus brevis).